Reading from the N-terminus, the 104-residue chain is Large ribosomal subunit protein uL24 (104 aa).

It belongs to the universal ribosomal protein uL24 family. Part of the 50S ribosomal subunit.

Its function is as follows. One of two assembly initiator proteins, it binds directly to the 5'-end of the 23S rRNA, where it nucleates assembly of the 50S subunit. Functionally, one of the proteins that surrounds the polypeptide exit tunnel on the outside of the subunit. This is Large ribosomal subunit protein uL24 from Corynebacterium jeikeium (strain K411).